We begin with the raw amino-acid sequence, 236 residues long: Sugar fermentation stimulation protein homolog (236 aa).

Belongs to the SfsA family.

In Methylobacterium nodulans (strain LMG 21967 / CNCM I-2342 / ORS 2060), this protein is Sugar fermentation stimulation protein homolog.